A 148-amino-acid chain; its full sequence is Large-conductance mechanosensitive channel (148 aa).

2 helical membrane-spanning segments follow: residues 12–32 (AFAM…GGAF) and 85–105 (GQFL…FLFI).

It belongs to the MscL family. As to quaternary structure, homopentamer.

It localises to the cell inner membrane. Channel that opens in response to stretch forces in the membrane lipid bilayer. May participate in the regulation of osmotic pressure changes within the cell. This Bacteroides thetaiotaomicron (strain ATCC 29148 / DSM 2079 / JCM 5827 / CCUG 10774 / NCTC 10582 / VPI-5482 / E50) protein is Large-conductance mechanosensitive channel.